The sequence spans 188 residues: MPHSSSGAPLDPVAFIHSQIRTVPDWPQPGVMFRDITTLLQSPKALRILVDLFVERYVDAKLDYVAGLDARGFIIAPIVAYELSVGFVPIRKVGKLPYKTCSESYDLEYGSATVEIHEDACRPGDRVIIMDDLIATGGTMMAGRNLLQRLGAVVVEGAAIIDLPDLGGSTLLRNAGLPIYTVTEFAGH.

Belongs to the purine/pyrimidine phosphoribosyltransferase family. In terms of assembly, homodimer.

It localises to the cytoplasm. The catalysed reaction is AMP + diphosphate = 5-phospho-alpha-D-ribose 1-diphosphate + adenine. Its pathway is purine metabolism; AMP biosynthesis via salvage pathway; AMP from adenine: step 1/1. Functionally, catalyzes a salvage reaction resulting in the formation of AMP, that is energically less costly than de novo synthesis. The polypeptide is Adenine phosphoribosyltransferase (Burkholderia vietnamiensis (strain G4 / LMG 22486) (Burkholderia cepacia (strain R1808))).